The primary structure comprises 77 residues: Putative sulfur carrier protein AF_0188 (77 aa).

The active-site Cysteine persulfide intermediate is C11.

This sequence belongs to the sulfur carrier protein TusA family.

This Archaeoglobus fulgidus (strain ATCC 49558 / DSM 4304 / JCM 9628 / NBRC 100126 / VC-16) protein is Putative sulfur carrier protein AF_0188.